Reading from the N-terminus, the 163-residue chain is Protein NAG1 (163 aa).

Residues 76 to 96 (ACFSVRIVLPLSLTISISALM) form a helical membrane-spanning segment.

It localises to the membrane. Functionally, involved in yeast cell wall biogenesis. In Saccharomyces cerevisiae (strain ATCC 204508 / S288c) (Baker's yeast), this protein is Protein NAG1 (NAG1).